The primary structure comprises 366 residues: Actin-like protein 8 (366 aa).

It belongs to the actin family. Strongly expressed in testis and pancreas. Weak expression in placenta.

Its subcellular location is the cytoplasm. It is found in the cytoskeleton. The polypeptide is Actin-like protein 8 (ACTL8) (Homo sapiens (Human)).